The following is a 187-amino-acid chain: Ribosome-recycling factor (187 aa).

It belongs to the RRF family.

It localises to the cytoplasm. In terms of biological role, responsible for the release of ribosomes from messenger RNA at the termination of protein biosynthesis. May increase the efficiency of translation by recycling ribosomes from one round of translation to another. This chain is Ribosome-recycling factor, found in Paracoccus zeaxanthinifaciens.